Here is a 173-residue protein sequence, read N- to C-terminus: Ribosome maturation factor RimM (173 aa).

Positions 94-173 constitute a PRC barrel domain; that stretch reads EGEFYWRDLI…TIEVDWDPGF (80 aa).

The protein belongs to the RimM family. In terms of assembly, binds ribosomal protein uS19.

It localises to the cytoplasm. Functionally, an accessory protein needed during the final step in the assembly of 30S ribosomal subunit, possibly for assembly of the head region. Essential for efficient processing of 16S rRNA. May be needed both before and after RbfA during the maturation of 16S rRNA. It has affinity for free ribosomal 30S subunits but not for 70S ribosomes. This chain is Ribosome maturation factor RimM, found in Aeromonas salmonicida (strain A449).